Here is a 263-residue protein sequence, read N- to C-terminus: MESITISQLKNWKINKKKFAAITAYDFSFSRLFSNCGIPVILIGDSLGMTIQGHTSTLPVKIEDIAYHTKAVRKGAPNTFLISDLPFMSYYDTKQALKNTAKIIRSGANMIKMEGGKWLIEIIRELSNRLILICGHIGLIPQSFHYLGGYKVQGRKENDANKLIDEALLLEESGINMLILECIPEKLAKKITESLSIPVIGIGSGKNTDGQILVMHDLLGITEGKTPSFTKNFLSESDSIQKAIQKYIYEVEHSIYPSKKHSF.

Mg(2+) contacts are provided by Asp-45 and Asp-84. Residues 45 to 46, Asp-84, and Lys-112 each bind 3-methyl-2-oxobutanoate; that span reads DS. A Mg(2+)-binding site is contributed by Glu-114. Residue Glu-181 is the Proton acceptor of the active site.

The protein belongs to the PanB family. Homodecamer; pentamer of dimers. The cofactor is Mg(2+).

The protein localises to the cytoplasm. It catalyses the reaction 3-methyl-2-oxobutanoate + (6R)-5,10-methylene-5,6,7,8-tetrahydrofolate + H2O = 2-dehydropantoate + (6S)-5,6,7,8-tetrahydrofolate. It functions in the pathway cofactor biosynthesis; (R)-pantothenate biosynthesis; (R)-pantoate from 3-methyl-2-oxobutanoate: step 1/2. Its function is as follows. Catalyzes the reversible reaction in which hydroxymethyl group from 5,10-methylenetetrahydrofolate is transferred onto alpha-ketoisovalerate to form ketopantoate. This chain is 3-methyl-2-oxobutanoate hydroxymethyltransferase, found in Buchnera aphidicola subsp. Acyrthosiphon pisum (strain APS) (Acyrthosiphon pisum symbiotic bacterium).